A 265-amino-acid polypeptide reads, in one-letter code: Very long chain fatty acid elongase 6 (265 aa).

Asn2 carries N-linked (GlcNAc...) asparagine glycosylation. Helical transmembrane passes span 34-51 (FLFSALYAAFIFGGRHLM), 70-90 (LAVFSIFGAVRTAPYMLYILM), 111-131 (FWAYAFVLSKAPELGDTIFII), 137-156 (LIFLHWYHHITVLLYSWYSY), 159-179 (MVAGGGWFMTMNYGVHAVMYS), 197-217 (FITLSQITQMLVGCVINYLVF), and 232-252 (IIWSSLMYLSYFVLFCHFFFE).

The protein belongs to the ELO family. ELOVL6 subfamily. Post-translationally, N-Glycosylated.

It is found in the endoplasmic reticulum membrane. It carries out the reaction a very-long-chain acyl-CoA + malonyl-CoA + H(+) = a very-long-chain 3-oxoacyl-CoA + CO2 + CoA. The enzyme catalyses hexadecanoyl-CoA + malonyl-CoA + H(+) = 3-oxooctadecanoyl-CoA + CO2 + CoA. The catalysed reaction is (9Z)-hexadecenoyl-CoA + malonyl-CoA + H(+) = 3-oxo-(11Z)-octadecenoyl-CoA + CO2 + CoA. It catalyses the reaction dodecanoyl-CoA + malonyl-CoA + H(+) = 3-oxotetradecanoyl-CoA + CO2 + CoA. It carries out the reaction tetradecanoyl-CoA + malonyl-CoA + H(+) = 3-oxohexadecanoyl-CoA + CO2 + CoA. The enzyme catalyses (9Z)-octadecenoyl-CoA + malonyl-CoA + H(+) = 3-oxo-(11Z)-eicosenoyl-CoA + CO2 + CoA. The catalysed reaction is (9Z,12Z)-octadecadienoyl-CoA + malonyl-CoA + H(+) = (11Z,14Z)-3-oxoicosa-11,14-dienoyl-CoA + CO2 + CoA. It catalyses the reaction (9Z,12Z,15Z)-octadecatrienoyl-CoA + malonyl-CoA + H(+) = (11Z,14Z,17Z)-3-oxoeicosatrienoyl-CoA + CO2 + CoA. Its pathway is lipid metabolism; fatty acid biosynthesis. The reaction is stimulated by the presence of HSD17B12, the enzyme catalyzing the second step of the elongation cycle. Functionally, catalyzes the first and rate-limiting reaction of the four reactions that constitute the long-chain fatty acids elongation cycle. This endoplasmic reticulum-bound enzymatic process allows the addition of 2 carbons to the chain of long- and very long-chain fatty acids (VLCFAs) per cycle. Condensing enzyme that elongates fatty acids with 12, 14 and 16 carbons with higher activity toward C16:0 acyl-CoAs. Catalyzes the synthesis of unsaturated C16 long chain fatty acids and, to a lesser extent, C18:0 and those with low desaturation degree. May participate in the production of saturated and monounsaturated VLCFAs of different chain lengths that are involved in multiple biological processes as precursors of membrane lipids and lipid mediators. This Gallus gallus (Chicken) protein is Very long chain fatty acid elongase 6.